A 233-amino-acid chain; its full sequence is Orotidine 5'-phosphate decarboxylase (233 aa).

Residues Asp9, Lys31, Asp58–Thr67, Thr120, Arg182, Gln191, Gly211, and Arg212 contribute to the substrate site. Lys60 (proton donor) is an active-site residue.

Belongs to the OMP decarboxylase family. Type 1 subfamily. As to quaternary structure, homodimer.

The catalysed reaction is orotidine 5'-phosphate + H(+) = UMP + CO2. The protein operates within pyrimidine metabolism; UMP biosynthesis via de novo pathway; UMP from orotate: step 2/2. Functionally, catalyzes the decarboxylation of orotidine 5'-monophosphate (OMP) to uridine 5'-monophosphate (UMP). In Listeria monocytogenes serovar 1/2a (strain ATCC BAA-679 / EGD-e), this protein is Orotidine 5'-phosphate decarboxylase.